Here is a 206-residue protein sequence, read N- to C-terminus: MGISRDSRHKRSATGAKRAQFRKKRKFELGRQPANTKIGPKRIHSVRTRGGNQKFRALRVETGNFSWGSEGVSRKTRIAGVVYHPSNNELVRTNTLTKSAVVQIDATPFRQWYENHYGATLGKKKGGAHAAHAAEVADAKRSRKVERKLAARSGAAAIESAVDSQFGSGRLYAVISSRPGQSGRCDGYILEGEELAFYLRRLTAKK.

The tract at residues 1 to 37 (MGISRDSRHKRSATGAKRAQFRKKRKFELGRQPANTK) is disordered.

It belongs to the eukaryotic ribosomal protein eS8 family. As to quaternary structure, component of the small ribosomal subunit. Mature ribosomes consist of a small (40S) and a large (60S) subunit. The 40S subunit contains about 32 different proteins and 1 molecule of RNA (18S). The 60S subunit contains 45 different proteins and 3 molecules of RNA (25S, 5.8S and 5S).

The protein resides in the cytoplasm. Functionally, component of the ribosome, a large ribonucleoprotein complex responsible for the synthesis of proteins in the cell. The small ribosomal subunit (SSU) binds messenger RNAs (mRNAs) and translates the encoded message by selecting cognate aminoacyl-transfer RNA (tRNA) molecules. The large subunit (LSU) contains the ribosomal catalytic site termed the peptidyl transferase center (PTC), which catalyzes the formation of peptide bonds, thereby polymerizing the amino acids delivered by tRNAs into a polypeptide chain. The nascent polypeptides leave the ribosome through a tunnel in the LSU and interact with protein factors that function in enzymatic processing, targeting, and the membrane insertion of nascent chains at the exit of the ribosomal tunnel. This chain is Small ribosomal subunit protein eS8 (RPS8A), found in Candida albicans (strain SC5314 / ATCC MYA-2876) (Yeast).